The following is a 194-amino-acid chain: Holliday junction branch migration complex subunit RuvA (194 aa).

The tract at residues 1-62 (MIGYLKGNVI…EDSLDLYGFK (62 aa)) is domain I. Residues 63–136 (TMEERELFET…KGKLKDMSGD (74 aa)) form a domain II region. The interval 136-140 (DFEEP) is flexible linker. The domain III stretch occupies residues 141–194 (LPDNRNTELSDALASLGYSELEIEEALSNADIKNNGSLEENIKKALGYLGSKGS).

Belongs to the RuvA family. In terms of assembly, homotetramer. Forms an RuvA(8)-RuvB(12)-Holliday junction (HJ) complex. HJ DNA is sandwiched between 2 RuvA tetramers; dsDNA enters through RuvA and exits via RuvB. An RuvB hexamer assembles on each DNA strand where it exits the tetramer. Each RuvB hexamer is contacted by two RuvA subunits (via domain III) on 2 adjacent RuvB subunits; this complex drives branch migration. In the full resolvosome a probable DNA-RuvA(4)-RuvB(12)-RuvC(2) complex forms which resolves the HJ.

The protein resides in the cytoplasm. Its function is as follows. The RuvA-RuvB-RuvC complex processes Holliday junction (HJ) DNA during genetic recombination and DNA repair, while the RuvA-RuvB complex plays an important role in the rescue of blocked DNA replication forks via replication fork reversal (RFR). RuvA specifically binds to HJ cruciform DNA, conferring on it an open structure. The RuvB hexamer acts as an ATP-dependent pump, pulling dsDNA into and through the RuvAB complex. HJ branch migration allows RuvC to scan DNA until it finds its consensus sequence, where it cleaves and resolves the cruciform DNA. The protein is Holliday junction branch migration complex subunit RuvA of Halothermothrix orenii (strain H 168 / OCM 544 / DSM 9562).